A 153-amino-acid chain; its full sequence is Ribosome maturation factor RimP (153 aa).

The protein belongs to the RimP family.

Its subcellular location is the cytoplasm. In terms of biological role, required for maturation of 30S ribosomal subunits. The chain is Ribosome maturation factor RimP from Rippkaea orientalis (strain PCC 8801 / RF-1) (Cyanothece sp. (strain PCC 8801)).